The primary structure comprises 294 residues: Survival motor neuron protein (294 aa).

A compositionally biased stretch (gly residues) spans 1–10 (MAMSSGGSGS). The tract at residues 1-32 (MAMSSGGSGSGVPEQEDAVLFRRGTGQSDDSD) is disordered. Alanine 2 is subject to N-acetylalanine. Phosphoserine; by PKA is present on residues serine 4, serine 5, and serine 8. The interval 13 to 44 (PEQEDAVLFRRGTGQSDDSDIWDDTALIKAYD) is P1 (binding site for GEMIN2). Threonine 25 carries the phosphothreonine modification. 2 positions are modified to phosphoserine: serine 28 and serine 31. Lysine 51 participates in a covalent cross-link: Glycyl lysine isopeptide (Lys-Gly) (interchain with G-Cter in SUMO2). The interval 60-88 (CETSGKSKTTPKRKPAKKNKSQKKNTAAS) is disordered. The segment covering 68-82 (TTPKRKPAKKNKSQK) has biased composition (basic residues). Threonine 69 carries the phosphothreonine modification. A Phosphothreonine; by PKA modification is found at threonine 85. The region spanning 91 to 151 (QWKVGDKCSA…LSPICEVANN (61 aa)) is the Tudor domain. The interval 97–209 (KCSAIWSEDG…MPGPRLGPGK (113 aa)) is required for interaction with RPP20/POP7. Residues 156–166 (AQENENESQVS) are compositionally biased toward low complexity. The tract at residues 156–222 (AQENENESQV…KFNGPPPPPP (67 aa)) is disordered. A Phosphoserine; by PKA modification is found at serine 187. Over residues 194–204 (LPPPPPMPGPR) the composition is skewed to pro residues. Over residues 206–215 (GPGKPGLKFN) the composition is skewed to low complexity. Residue lysine 209 forms a Glycyl lysine isopeptide (Lys-Gly) (interchain with G-Cter in SUMO2) linkage. The tract at residues 240 to 267 (PPIIPPPPPICPDSLDDADALGSMLISW) is P2 (binding site for SM B). Positions 279–294 (GFRQNQKEGRCSHSLN) are required for interaction with SYNCRIP.

Belongs to the SMN family. As to quaternary structure, homooligomer; may form higher order homooligomers in the dimer to octamer range. Part of the core SMN complex that contains SMN1, GEMIN2/SIP1, DDX20/GEMIN3, GEMIN4, GEMIN5, GEMIN6, GEMIN7, GEMIN8 and STRAP/UNRIP. Part of the SMN-Sm complex that contains SMN1, GEMIN2/SIP1, DDX20/GEMIN3, GEMIN4, GEMIN5, GEMIN6, GEMIN7, GEMIN8, STRAP/UNRIP and the Sm proteins SNRPB, SNRPD1, SNRPD2, SNRPD3, SNRPE, SNRPF and SNRPG. Component of an import snRNP complex composed of KPNB1, RNUT1, SMN1 and ZNF259. Interacts with DDX20, FBL, NOLA1, RNUT1, SYNCRIP and with several spliceosomal snRNP core Sm proteins, including SNRPB, SNRPD1, SNRPD2, SNRPD3, SNRPE and ILF3. Interacts with GEMIN2; the interaction is direct. Interacts with GEMIN3; the interaction is direct. Interacts with GEMIN8; the interaction is direct. Interacts with SNRPB; the interaction is direct. Interacts (via Tudor domain) with SNRPD1 (via C-terminus); the interaction is direct. Interacts with SNRPD2; the interaction is direct. Interacts (via Tudor domain) with SNRPD3 (via C-terminus); the interaction is direct. Interacts with SNRPE; the interaction is direct. Interacts with OSTF1, LSM10, LSM11 and RPP20/POP7. Interacts (via C-terminal region) with ZPR1 (via C-terminal region). Interacts (via Tudor domain) with COIL. Interacts with SETX; recruits SETX to POLR2A. Interacts with POLR2A (via the C-terminal domain (CTD)). Interacts with PRMT5. Interacts with XRN2. Interacts (via C-terminus) with FMR1 (via C-terminus); the interaction is direct and occurs in a RNA-independent manner. Interacts (via Tudor domain) with SF3B2 ('Arg-508'-methylated form). Interacts with WRAP53/TCAB1. Interacts (via Tudor domain) with ELAVL4 in an RNA-independent manner; the interaction is required for localization of ELAVL4 to RNA granules. Interacts with FRG1.

It is found in the nucleus. It localises to the gem. Its subcellular location is the cajal body. The protein resides in the cytoplasm. The protein localises to the cytoplasmic granule. It is found in the perikaryon. It localises to the cell projection. Its subcellular location is the neuron projection. The protein resides in the axon. The protein localises to the myofibril. It is found in the sarcomere. It localises to the z line. Functionally, the SMN complex catalyzes the assembly of small nuclear ribonucleoproteins (snRNPs), the building blocks of the spliceosome, and thereby plays an important role in the splicing of cellular pre-mRNAs. Most spliceosomal snRNPs contain a common set of Sm proteins SNRPB, SNRPD1, SNRPD2, SNRPD3, SNRPE, SNRPF and SNRPG that assemble in a heptameric protein ring on the Sm site of the small nuclear RNA to form the core snRNP (Sm core). In the cytosol, the Sm proteins SNRPD1, SNRPD2, SNRPE, SNRPF and SNRPG are trapped in an inactive 6S pICln-Sm complex by the chaperone CLNS1A that controls the assembly of the core snRNP. To assemble core snRNPs, the SMN complex accepts the trapped 5Sm proteins from CLNS1A forming an intermediate. Binding of snRNA inside 5Sm ultimately triggers eviction of the SMN complex, thereby allowing binding of SNRPD3 and SNRPB to complete assembly of the core snRNP. Within the SMN complex, SMN1 acts as a structural backbone and together with GEMIN2 it gathers the Sm complex subunits. Ensures the correct splicing of U12 intron-containing genes that may be important for normal motor and proprioceptive neurons development. Also required for resolving RNA-DNA hybrids created by RNA polymerase II, that form R-loop in transcription terminal regions, an important step in proper transcription termination. May also play a role in the metabolism of small nucleolar ribonucleoprotein (snoRNPs). This Pongo abelii (Sumatran orangutan) protein is Survival motor neuron protein (SMN1).